The following is a 234-amino-acid chain: Thrombin-like enzyme contortrixobin (234 aa).

One can recognise a Peptidase S1 domain in the interval 1-225 (VVGGDECNIN…YNDWIQSIIA (225 aa)). 6 disulfides stabilise this stretch: C7-C139, C26-C42, C74-C232, C118-C186, C150-C165, and C176-C201. Residues H41 and D86 each act as charge relay system in the active site. S180 serves as the catalytic Charge relay system.

Monomer. Not glycosylated. Expressed by the venom gland.

It is found in the secreted. Strongly inhibited by diisopropylfluorophosphate (DFP) and to a lesser extent by PMSF, benzamidine and 4,6-diamidino-2-phenylindole. Low inhibition by hirudin. Functionally, thrombin-like snake venom serine protease that cleaves beta chain of fibrinogen (FGB), releasing fibrinopeptide B. Has a coagulant activity activating blood coagulation factors V (F5) and XIII (F13A1). This Agkistrodon contortrix contortrix (Southern copperhead) protein is Thrombin-like enzyme contortrixobin.